We begin with the raw amino-acid sequence, 424 residues long: tRNA(Met) cytidine acetate ligase (424 aa).

ATP-binding positions include 7 to 20 (ITEY…HLHH), G102, N174, and R199.

The protein belongs to the TmcAL family.

Its subcellular location is the cytoplasm. It carries out the reaction cytidine(34) in elongator tRNA(Met) + acetate + ATP = N(4)-acetylcytidine(34) in elongator tRNA(Met) + AMP + diphosphate. Functionally, catalyzes the formation of N(4)-acetylcytidine (ac(4)C) at the wobble position of elongator tRNA(Met), using acetate and ATP as substrates. First activates an acetate ion to form acetyladenylate (Ac-AMP) and then transfers the acetyl group to tRNA to form ac(4)C34. This Alkaliphilus metalliredigens (strain QYMF) protein is tRNA(Met) cytidine acetate ligase.